Consider the following 428-residue polypeptide: Light-independent protochlorophyllide reductase subunit N (428 aa).

3 residues coordinate [4Fe-4S] cluster: C29, C54, and C115.

It belongs to the BchN/ChlN family. In terms of assembly, protochlorophyllide reductase is composed of three subunits; BchL, BchN and BchB. Forms a heterotetramer of two BchB and two BchN subunits. [4Fe-4S] cluster is required as a cofactor.

It catalyses the reaction chlorophyllide a + oxidized 2[4Fe-4S]-[ferredoxin] + 2 ADP + 2 phosphate = protochlorophyllide a + reduced 2[4Fe-4S]-[ferredoxin] + 2 ATP + 2 H2O. It functions in the pathway porphyrin-containing compound metabolism; bacteriochlorophyll biosynthesis (light-independent). Component of the dark-operative protochlorophyllide reductase (DPOR) that uses Mg-ATP and reduced ferredoxin to reduce ring D of protochlorophyllide (Pchlide) to form chlorophyllide a (Chlide). This reaction is light-independent. The NB-protein (BchN-BchB) is the catalytic component of the complex. This chain is Light-independent protochlorophyllide reductase subunit N, found in Cereibacter sphaeroides (strain ATCC 17029 / ATH 2.4.9) (Rhodobacter sphaeroides).